The sequence spans 123 residues: Large ribosomal subunit protein uL14 (123 aa).

Belongs to the universal ribosomal protein uL14 family. Part of the 50S ribosomal subunit. Forms a cluster with proteins L3 and L19. In the 70S ribosome, L14 and L19 interact and together make contacts with the 16S rRNA in bridges B5 and B8.

Functionally, binds to 23S rRNA. Forms part of two intersubunit bridges in the 70S ribosome. In Citrobacter koseri (strain ATCC BAA-895 / CDC 4225-83 / SGSC4696), this protein is Large ribosomal subunit protein uL14.